Reading from the N-terminus, the 628-residue chain is ATP-dependent zinc metalloprotease FtsH (628 aa).

Topologically, residues 1 to 7 (MKLSWKT) are stromal. Residues 8–28 (LLLWSLPIFVIGFFFWQGFLG) form a helical membrane-spanning segment. The Lumenal portion of the chain corresponds to 29–118 (PTTTDVGSNI…AHPPKSTSAV (90 aa)). Residues 119-139 (WGLLGNLLFPLLLVGGLAFLF) form a helical membrane-spanning segment. The Stromal portion of the chain corresponds to 140-628 (RRSNNASGGP…PEKNYYISQF (489 aa)). 213-220 (GPPGTGKT) is an ATP binding site. His434 provides a ligand contact to Zn(2+). Glu435 is a catalytic residue. Zn(2+)-binding residues include His438 and Asp512.

In the central section; belongs to the AAA ATPase family. The protein in the C-terminal section; belongs to the peptidase M41 family. Homohexamer. The cofactor is Zn(2+).

It localises to the plastid. It is found in the chloroplast thylakoid membrane. Its function is as follows. Acts as a processive, ATP-dependent zinc metallopeptidase. The chain is ATP-dependent zinc metalloprotease FtsH from Pyropia yezoensis (Susabi-nori).